A 335-amino-acid chain; its full sequence is GTPase Obg (335 aa).

The region spanning 1-159 is the Obg domain; the sequence is MQFIDRSEIE…RKLLLELKLL (159 aa). The OBG-type G domain occupies 160 to 328; that stretch reads AEVGIIGLPN…LLARVWQVLE (169 aa). GTP is bound by residues 166–173, 191–195, 213–216, 280–283, and 309–311; these read GLPNAGKS, FTTLV, DIPG, NKAD, and SAA. Residues Ser173 and Thr193 each contribute to the Mg(2+) site.

The protein belongs to the TRAFAC class OBG-HflX-like GTPase superfamily. OBG GTPase family. In terms of assembly, monomer. Mg(2+) serves as cofactor.

The protein resides in the cytoplasm. Its function is as follows. An essential GTPase which binds GTP, GDP and possibly (p)ppGpp with moderate affinity, with high nucleotide exchange rates and a fairly low GTP hydrolysis rate. Plays a role in control of the cell cycle, stress response, ribosome biogenesis and in those bacteria that undergo differentiation, in morphogenesis control. The protein is GTPase Obg of Gloeobacter violaceus (strain ATCC 29082 / PCC 7421).